Here is a 188-residue protein sequence, read N- to C-terminus: Kappa-casein (188 aa).

A signal peptide spans 1 to 21 (MMKSSFLIVPILALTLPFLGA). Residues Thr-143 and Thr-148 are each glycosylated (O-linked (GalNAc...) threonine). Thr-163 bears the Phosphothreonine mark. Ser-167 carries the phosphoserine; alternate modification. Residue Ser-167 is glycosylated (O-linked (GalNAc...) serine; alternate). An O-linked (GalNAc...) threonine glycan is attached at Thr-184. Ser-185 is modified (phosphoserine).

Belongs to the kappa-casein family. As to expression, mammary gland specific. Secreted in milk.

Its subcellular location is the secreted. Functionally, kappa-casein stabilizes micelle formation, preventing casein precipitation in milk. This chain is Kappa-casein (CSN3), found in Sus scrofa (Pig).